The following is a 263-amino-acid chain: Endonuclease 8 (263 aa).

Catalysis depends on Pro-2, which acts as the Schiff-base intermediate with DNA. The active-site Proton donor is Glu-3. Lys-53 functions as the Proton donor; for beta-elimination activity in the catalytic mechanism. Residues Gln-70, Arg-125, and Asn-169 each coordinate DNA. Residues 229-263 form an FPG-type zinc finger; sequence KVFHRDGERCERCGGVIEKTTLSSRPFYWCPGCQH. The active-site Proton donor; for delta-elimination activity is the Arg-253.

The protein belongs to the FPG family. Requires Zn(2+) as cofactor.

It carries out the reaction 2'-deoxyribonucleotide-(2'-deoxyribose 5'-phosphate)-2'-deoxyribonucleotide-DNA = a 3'-end 2'-deoxyribonucleotide-(2,3-dehydro-2,3-deoxyribose 5'-phosphate)-DNA + a 5'-end 5'-phospho-2'-deoxyribonucleoside-DNA + H(+). Its function is as follows. Involved in base excision repair of DNA damaged by oxidation or by mutagenic agents. Acts as a DNA glycosylase that recognizes and removes damaged bases. Has a preference for oxidized pyrimidines, such as thymine glycol, 5,6-dihydrouracil and 5,6-dihydrothymine. Has AP (apurinic/apyrimidinic) lyase activity and introduces nicks in the DNA strand. Cleaves the DNA backbone by beta-delta elimination to generate a single-strand break at the site of the removed base with both 3'- and 5'-phosphates. This Klebsiella pneumoniae (strain 342) protein is Endonuclease 8.